Consider the following 312-residue polypeptide: Ribonuclease Z (312 aa).

Residues His63, His65, Asp67, His68, His141, Asp212, and His270 each contribute to the Zn(2+) site. Catalysis depends on Asp67, which acts as the Proton acceptor.

It belongs to the RNase Z family. In terms of assembly, homodimer. Zn(2+) serves as cofactor.

The catalysed reaction is Endonucleolytic cleavage of RNA, removing extra 3' nucleotides from tRNA precursor, generating 3' termini of tRNAs. A 3'-hydroxy group is left at the tRNA terminus and a 5'-phosphoryl group is left at the trailer molecule.. Its function is as follows. Zinc phosphodiesterase, which displays some tRNA 3'-processing endonuclease activity. Probably involved in tRNA maturation, by removing a 3'-trailer from precursor tRNA. In Lactobacillus acidophilus (strain ATCC 700396 / NCK56 / N2 / NCFM), this protein is Ribonuclease Z.